Here is a 212-residue protein sequence, read N- to C-terminus: Ribonuclease HII (212 aa).

The region spanning Gly-18 to Arg-212 is the RNase H type-2 domain. A divalent metal cation is bound by residues Asp-24, Glu-25, and Asp-118.

Belongs to the RNase HII family. Mn(2+) is required as a cofactor. The cofactor is Mg(2+).

It localises to the cytoplasm. The enzyme catalyses Endonucleolytic cleavage to 5'-phosphomonoester.. In terms of biological role, endonuclease that specifically degrades the RNA of RNA-DNA hybrids. The polypeptide is Ribonuclease HII (Erythrobacter litoralis (strain HTCC2594)).